The primary structure comprises 327 residues: uncharacterized protein (327 aa).

Residues 12-79 enclose the S4 RNA-binding domain; the sequence is KRLDEFLAKE…LKKELDLEIE (68 aa). The active site involves D136.

The protein belongs to the pseudouridine synthase RluA family.

The enzyme catalyses a uridine in RNA = a pseudouridine in RNA. This is an uncharacterized protein from Helicobacter pylori (strain ATCC 700392 / 26695) (Campylobacter pylori).